Consider the following 627-residue polypeptide: tRNA uridine 5-carboxymethylaminomethyl modification enzyme MnmG (627 aa).

FAD is bound by residues 13–18 (GGGHAG), Val-125, and Ser-180. 274 to 288 (GPRYCPSIEDKVVRF) is an NAD(+) binding site. Gln-371 contributes to the FAD binding site.

Belongs to the MnmG family. In terms of assembly, homodimer. Heterotetramer of two MnmE and two MnmG subunits. Requires FAD as cofactor.

The protein resides in the cytoplasm. NAD-binding protein involved in the addition of a carboxymethylaminomethyl (cmnm) group at the wobble position (U34) of certain tRNAs, forming tRNA-cmnm(5)s(2)U34. This Francisella tularensis subsp. tularensis (strain WY96-3418) protein is tRNA uridine 5-carboxymethylaminomethyl modification enzyme MnmG.